A 244-amino-acid chain; its full sequence is Uridylate kinase (244 aa).

19 to 22 (KVSG) serves as a coordination point for ATP. The tract at residues 27–32 (GERGFG) is involved in allosteric activation by GTP. Gly61 serves as a coordination point for UMP. Gly62 and Arg66 together coordinate ATP. UMP contacts are provided by residues Asp80 and 141 to 148 (IGSPFFTT). ATP is bound by residues Thr168, Gln169, Tyr174, and Asp177.

This sequence belongs to the UMP kinase family. Homohexamer.

The protein localises to the cytoplasm. It catalyses the reaction UMP + ATP = UDP + ADP. Its pathway is pyrimidine metabolism; CTP biosynthesis via de novo pathway; UDP from UMP (UMPK route): step 1/1. Its activity is regulated as follows. Allosterically activated by GTP. Inhibited by UTP. Catalyzes the reversible phosphorylation of UMP to UDP. This chain is Uridylate kinase, found in Anaplasma phagocytophilum (strain HZ).